The primary structure comprises 527 residues: Flagellar radial spoke protein 5 (527 aa).

A disordered region spans residues Met-1–Asn-22. A coiled-coil region spans residues Arg-101–Phe-153. Asymmetric dimethylarginine is present on residues Arg-191 and Arg-366.

The protein belongs to the aldo/keto reductase family. Post-translationally, asymmetrically dimethylated at Arg-191 and Arg-366 during flagellum resorption. Probably methylated by PRMT1.

The protein localises to the cytoplasm. The protein resides in the cytoskeleton. Its subcellular location is the flagellum axoneme. Functionally, flagellar radial spokes contribute to the regulation of dynein arm activity and thus the pattern of flagellar bending. They consist of a thin stalk, which is attached to the a subfiber of the outer doublet microtubule, and a bulbous head, which is attached to the stalk and appears to interact with the projections from the central pair of microtubules. The chain is Flagellar radial spoke protein 5 from Chlamydomonas reinhardtii (Chlamydomonas smithii).